The sequence spans 201 residues: Probable nicotinate-nucleotide adenylyltransferase (201 aa).

Belongs to the NadD family.

It catalyses the reaction nicotinate beta-D-ribonucleotide + ATP + H(+) = deamido-NAD(+) + diphosphate. It functions in the pathway cofactor biosynthesis; NAD(+) biosynthesis; deamido-NAD(+) from nicotinate D-ribonucleotide: step 1/1. Its function is as follows. Catalyzes the reversible adenylation of nicotinate mononucleotide (NaMN) to nicotinic acid adenine dinucleotide (NaAD). The sequence is that of Probable nicotinate-nucleotide adenylyltransferase from Clostridium botulinum (strain Kyoto / Type A2).